We begin with the raw amino-acid sequence, 300 residues long: 2-methylisocitrate lyase (300 aa).

A substrate-binding site is contributed by 53–55 (SGD). Mg(2+)-binding residues include Asp-92 and Asp-94. Substrate-binding positions include 129-130 (CG), Arg-162, Glu-192, 214-216 (NMT), Arg-245, and Arg-274.

The protein belongs to the isocitrate lyase/PEP mutase superfamily. Methylisocitrate lyase family. The cofactor is Mg(2+).

It catalyses the reaction 3-hydroxybutane-1,2,3-tricarboxylate = pyruvate + succinate. In terms of biological role, involved in the methylcitric acid cycle. Catalyzes the cleavage of 2-methylisocitrate to yield pyruvate and succinate. The sequence is that of 2-methylisocitrate lyase from Halalkalibacterium halodurans (strain ATCC BAA-125 / DSM 18197 / FERM 7344 / JCM 9153 / C-125) (Bacillus halodurans).